Here is a 398-residue protein sequence, read N- to C-terminus: Glycosyltransferase GlyF (398 aa).

Residues 1 to 259 are GT8 domain; that stretch reads MRKSIVLAAD…SEIAFQRSDL (259 aa). UDP-binding positions include 8–13 and 101–102; these read AADNAY and DS. Residues D101, D103, and H221 each contribute to the Mn(2+) site. 221-227 lines the UDP pocket; the sequence is HYASHDK.

This sequence in the N-terminal section; belongs to the glycosyltransferase 8 family.

Its function is as follows. May be involved in the polymorphic O-glycosylation of the serine-rich repeat protein PsrP. Has hydrolytic activity against UDP-galactose and to a lesser extent against UDP-glucose; no glycosyltransferase activity has been seen with tested substrates. In Streptococcus pneumoniae serotype 4 (strain ATCC BAA-334 / TIGR4), this protein is Glycosyltransferase GlyF.